The sequence spans 169 residues: Peptide deformylase (169 aa).

Positions 91 and 133 each coordinate Fe cation. Glutamate 134 is an active-site residue. Histidine 137 contacts Fe cation.

It belongs to the polypeptide deformylase family. Requires Fe(2+) as cofactor.

It catalyses the reaction N-terminal N-formyl-L-methionyl-[peptide] + H2O = N-terminal L-methionyl-[peptide] + formate. Its function is as follows. Removes the formyl group from the N-terminal Met of newly synthesized proteins. Requires at least a dipeptide for an efficient rate of reaction. N-terminal L-methionine is a prerequisite for activity but the enzyme has broad specificity at other positions. This chain is Peptide deformylase, found in Salmonella arizonae (strain ATCC BAA-731 / CDC346-86 / RSK2980).